The chain runs to 271 residues: Ribosomal RNA small subunit methyltransferase A (271 aa).

The S-adenosyl-L-methionine site is built by His14, Leu16, Gly41, Glu63, Asp89, and Asn107.

Belongs to the class I-like SAM-binding methyltransferase superfamily. rRNA adenine N(6)-methyltransferase family. RsmA subfamily.

It localises to the cytoplasm. It carries out the reaction adenosine(1518)/adenosine(1519) in 16S rRNA + 4 S-adenosyl-L-methionine = N(6)-dimethyladenosine(1518)/N(6)-dimethyladenosine(1519) in 16S rRNA + 4 S-adenosyl-L-homocysteine + 4 H(+). In terms of biological role, specifically dimethylates two adjacent adenosines (A1518 and A1519) in the loop of a conserved hairpin near the 3'-end of 16S rRNA in the 30S particle. May play a critical role in biogenesis of 30S subunits. The sequence is that of Ribosomal RNA small subunit methyltransferase A from Lawsonia intracellularis (strain PHE/MN1-00).